The chain runs to 82 residues: uncharacterized protein (82 aa).

This is an uncharacterized protein from Saccharomyces cerevisiae (strain ATCC 204508 / S288c) (Baker's yeast).